Here is a 145-residue protein sequence, read N- to C-terminus: D-aminoacyl-tRNA deacylase (145 aa).

Positions 137 to 138 (GP) match the Gly-cisPro motif, important for rejection of L-amino acids motif.

It belongs to the DTD family. Homodimer.

It localises to the cytoplasm. The catalysed reaction is glycyl-tRNA(Ala) + H2O = tRNA(Ala) + glycine + H(+). The enzyme catalyses a D-aminoacyl-tRNA + H2O = a tRNA + a D-alpha-amino acid + H(+). Functionally, an aminoacyl-tRNA editing enzyme that deacylates mischarged D-aminoacyl-tRNAs. Also deacylates mischarged glycyl-tRNA(Ala), protecting cells against glycine mischarging by AlaRS. Acts via tRNA-based rather than protein-based catalysis; rejects L-amino acids rather than detecting D-amino acids in the active site. By recycling D-aminoacyl-tRNA to D-amino acids and free tRNA molecules, this enzyme counteracts the toxicity associated with the formation of D-aminoacyl-tRNA entities in vivo and helps enforce protein L-homochirality. This is D-aminoacyl-tRNA deacylase from Limosilactobacillus reuteri (strain DSM 20016) (Lactobacillus reuteri).